A 661-amino-acid chain; its full sequence is Acetyl-coenzyme A synthetase (661 aa).

CoA is bound by residues 197–200 (RGGK) and Thr-320. ATP-binding positions include 396–398 (GEP), 420–425 (DTWWQT), Asp-511, and Arg-526. Ser-534 contacts CoA. Position 537 (Arg-537) interacts with ATP. Mg(2+) contacts are provided by Val-548 and Val-553. Lys-620 is subject to N6-acetyllysine.

The protein belongs to the ATP-dependent AMP-binding enzyme family. Mg(2+) serves as cofactor. In terms of processing, acetylated. Deacetylation by the SIR2-homolog deacetylase activates the enzyme.

It carries out the reaction acetate + ATP + CoA = acetyl-CoA + AMP + diphosphate. Catalyzes the conversion of acetate into acetyl-CoA (AcCoA), an essential intermediate at the junction of anabolic and catabolic pathways. AcsA undergoes a two-step reaction. In the first half reaction, AcsA combines acetate with ATP to form acetyl-adenylate (AcAMP) intermediate. In the second half reaction, it can then transfer the acetyl group from AcAMP to the sulfhydryl group of CoA, forming the product AcCoA. The protein is Acetyl-coenzyme A synthetase of Leptospira interrogans serogroup Icterohaemorrhagiae serovar Lai (strain 56601).